Here is a 281-residue protein sequence, read N- to C-terminus: Urease accessory protein UreD 2 (281 aa).

Belongs to the UreD family. In terms of assembly, ureD, UreF and UreG form a complex that acts as a GTP-hydrolysis-dependent molecular chaperone, activating the urease apoprotein by helping to assemble the nickel containing metallocenter of UreC. The UreE protein probably delivers the nickel.

Its subcellular location is the cytoplasm. Its function is as follows. Required for maturation of urease via the functional incorporation of the urease nickel metallocenter. The protein is Urease accessory protein UreD 2 of Pseudomonas syringae pv. tomato (strain ATCC BAA-871 / DC3000).